The following is a 359-amino-acid chain: MKKTLAALIVGAFAASAANAAVVYNNEGTNVELGGRLSIIAEQSNSTVDNQKQQHGALRNQGSRFHIKATHNFGDGFYAQGYLETRFVTKASENGSDNFGDITSKYAYVTLGNKAFGEVKLGRAKTIADGITSAEDKEYGVLNNSDYIPTSGNTVGYTFKGIDGLVLGANYLLAQKREGAKNTNKQPNDKAGEVRIGEINNGIQVGAKYDANDIVAKIAYGRTNYKYNEADEHTQQLNGVLATLGYRFSDLGLLVSLDSGYAKTKNYKTKHEKRYFVSPGFQYELMEDTNVYGNFKYERTSVDQGEKTREQAVLFGVDHKLHKQLLTYIEGAYARTKTTNGGVKTEKEKSVGVGLRVYF.

The N-terminal stretch at 1–20 (MKKTLAALIVGAFAASAANA) is a signal peptide.

It belongs to the Gram-negative porin family. As to quaternary structure, homotrimer.

The protein resides in the cell outer membrane. Its function is as follows. Forms pores that allow passive diffusion of small molecules across the outer membrane. The protein is Outer membrane protein P2 (ompP2) of Haemophilus influenzae (strain ATCC 51907 / DSM 11121 / KW20 / Rd).